A 149-amino-acid chain; its full sequence is Large ribosomal subunit protein bL9 (149 aa).

This sequence belongs to the bacterial ribosomal protein bL9 family.

Its function is as follows. Binds to the 23S rRNA. The chain is Large ribosomal subunit protein bL9 from Cutibacterium acnes (strain DSM 16379 / KPA171202) (Propionibacterium acnes).